The chain runs to 415 residues: Tyrosine--tRNA ligase (415 aa).

A 'HIGH' region motif is present at residues 54–63 (PTGSNIHLGH). The short motif at 248 to 252 (KMSKS) is the 'KMSKS' region element. K251 contacts ATP. The S4 RNA-binding domain occupies 351–414 (AKAFYLFSAV…LGKKTFRRLV (64 aa)).

This sequence belongs to the class-I aminoacyl-tRNA synthetase family. TyrS type 2 subfamily. In terms of assembly, homodimer.

The protein resides in the cytoplasm. It catalyses the reaction tRNA(Tyr) + L-tyrosine + ATP = L-tyrosyl-tRNA(Tyr) + AMP + diphosphate + H(+). Functionally, catalyzes the attachment of tyrosine to tRNA(Tyr) in a two-step reaction: tyrosine is first activated by ATP to form Tyr-AMP and then transferred to the acceptor end of tRNA(Tyr). In Synechococcus sp. (strain CC9605), this protein is Tyrosine--tRNA ligase.